The sequence spans 110 residues: U1-lycotoxin-Ls1dd (110 aa).

The signal sequence occupies residues 1–20 (MKFVLLFGVLLVTLFSYSSA). Positions 21-44 (EMLDDFDQADEDELLSLIEKEEAR) are excised as a propeptide. Intrachain disulfides connect C47–C62, C54–C71, C61–C89, and C73–C87.

The protein belongs to the neurotoxin 19 (CSTX) family. 03 subfamily. As to expression, expressed by the venom gland.

It is found in the secreted. The chain is U1-lycotoxin-Ls1dd from Lycosa singoriensis (Wolf spider).